Here is a 275-residue protein sequence, read N- to C-terminus: L-aspartate dehydrogenase (275 aa).

2 residues coordinate NAD(+): alanine 130 and asparagine 196. Histidine 226 is an active-site residue.

This sequence belongs to the L-aspartate dehydrogenase family.

The catalysed reaction is L-aspartate + NADP(+) + H2O = oxaloacetate + NH4(+) + NADPH + H(+). It carries out the reaction L-aspartate + NAD(+) + H2O = oxaloacetate + NH4(+) + NADH + H(+). The protein operates within cofactor biosynthesis; NAD(+) biosynthesis; iminoaspartate from L-aspartate (dehydrogenase route): step 1/1. In terms of biological role, specifically catalyzes the NAD or NADP-dependent dehydrogenation of L-aspartate to iminoaspartate. This chain is L-aspartate dehydrogenase, found in Ruegeria pomeroyi (strain ATCC 700808 / DSM 15171 / DSS-3) (Silicibacter pomeroyi).